The following is a 1355-amino-acid chain: Phospholipid-transporting ATPase DRS2 (1355 aa).

The span at methionine 1–glutamate 15 shows a compositional bias: basic and acidic residues. Positions methionine 1 to proline 50 are disordered. An involved in autoinhibition region spans residues methionine 1–arginine 104. Residues methionine 1–glutamate 221 are Cytoplasmic-facing. Residues aspartate 16–aspartate 26 show a composition bias toward acidic residues. The span at serine 30–asparagine 44 shows a compositional bias: polar residues. Serine 102 bears the Phosphoserine mark. A helical membrane pass occupies residues phenylalanine 222–valine 242. An involved in phosphatidylserine substrate recognition region spans residues glutamine 237–glutamine 238. Over serine 243 to asparagine 246 the chain is Lumenal. The chain crosses the membrane as a helical span at residues arginine 247 to isoleucine 267. The Cytoplasmic portion of the chain corresponds to glutamate 268–isoleucine 449. Residues alanine 450–serine 470 traverse the membrane as a helical segment. The Lumenal portion of the chain corresponds to threonine 471–leucine 490. Residues phenylalanine 491–phenylalanine 511 form a helical membrane-spanning segment. Over valine 512–isoleucine 1012 the chain is Cytoplasmic. The 4-aspartylphosphate intermediate role is filled by aspartate 560. Residues aspartate 560, lysine 561, threonine 562, glutamate 655, phenylalanine 698, serine 700, lysine 703, lysine 721, arginine 755, threonine 756, threonine 835, glycine 836, aspartate 837, arginine 928, and lysine 934 each contribute to the ATP site. A Mg(2+)-binding site is contributed by aspartate 560. Threonine 562 lines the Mg(2+) pocket. Aspartate 954 is a Mg(2+) binding site. The ATP site is built by asparagine 957 and aspartate 958. Mg(2+) is bound at residue aspartate 958. Residues leucine 1013–asparagine 1033 form a helical membrane-spanning segment. The Lumenal portion of the chain corresponds to alanine 1034–serine 1043. Residues tryptophan 1044–phenylalanine 1064 traverse the membrane as a helical segment. At aspartate 1065 to phenylalanine 1094 the chain is on the cytoplasmic side. The helical transmembrane segment at tryptophan 1095 to isoleucine 1115 threads the bilayer. The Lumenal segment spans residues tyrosine 1116–histidine 1131. Residues tryptophan 1132 to leucine 1152 form a helical membrane-spanning segment. Residue lysine 1149 coordinates a 1,2-diacyl-sn-glycero-3-phospho-(1D-myo-inositol 4-phosphate). Residues valine 1153–threonine 1161 lie on the Cytoplasmic side of the membrane. The helical transmembrane segment at leucine 1162 to isoleucine 1182 threads the bilayer. The Lumenal portion of the chain corresponds to phenylalanine 1183–serine 1202. The chain crosses the membrane as a helical span at residues glycine 1203–tryptophan 1223. A 1,2-diacyl-sn-glycero-3-phospho-(1D-myo-inositol 4-phosphate) contacts are provided by arginine 1219, tryptophan 1223, lysine 1224, tyrosine 1235, and histidine 1236. At lysine 1224–isoleucine 1355 the chain is on the cytoplasmic side. Residues tyrosine 1230–glutamate 1282 form an interaction with GEA2 region. The interval glutamate 1231 to alanine 1309 is involved in autoinhibition. Residues glutamine 1305–isoleucine 1355 form a disordered region. Residues alanine 1307–phenylalanine 1323 show a composition bias toward polar residues. Positions serine 1346–isoleucine 1355 are enriched in basic and acidic residues.

Belongs to the cation transport ATPase (P-type) (TC 3.A.3) family. Type IV subfamily. In terms of assembly, component of a flippase complex consisting of DRS2 and CDC50. Interacts with CDC50; the interaction is direct, is required for their mutual export from the endoplasmic reticulum, and preferentially occurs when DRS2 is in the E2P state. Interacts (via C-terminus) with GEA2 (via SEC7 domain); the interaction is direct. Interacts with GEA1. The cofactor is Mg(2+).

It is found in the golgi apparatus. Its subcellular location is the trans-Golgi network membrane. It localises to the endosome membrane. The enzyme catalyses ATP + H2O + phospholipidSide 1 = ADP + phosphate + phospholipidSide 2.. The catalysed reaction is a 1,2-diacyl-sn-glycero-3-phospho-L-serine(out) + ATP + H2O = a 1,2-diacyl-sn-glycero-3-phospho-L-serine(in) + ADP + phosphate + H(+). It catalyses the reaction a 1,2-diacyl-sn-glycero-3-phosphoethanolamine(out) + ATP + H2O = a 1,2-diacyl-sn-glycero-3-phosphoethanolamine(in) + ADP + phosphate + H(+). With respect to regulation, allosterically activated by binding 1,2-diacyl-sn-glycero-3-phospho-(1D-myo-inositol 4-phosphate) (phosphatidylinositol 4-phosphate). Inhibited by orthovanadate, N-ethylmaleimide, trifluoroberyllate and tetrafluoroaluminate; orthovanadate and N-ethylmaleimide inhibit phosphorylation of the active site aspartic acid. The ATPase activity is not potently stimulated by phosphatidylinositol 3-phosphate and phosphatidylinositol 5-phosphate, phosphatidylinositol 4,5-bisphosphate or phosphatidylcholine. Not inhibited by azide. Its function is as follows. Catalytic component of a P4-ATPase flippase complex which catalyzes the hydrolysis of ATP coupled to the transport of phosphatidylserine and small amounts of ethanolamine from the lumen to the cytosolic leaflet of the trans-Golgi network and ensures the maintenance of asymmetric distribution of phospholipids. Contributes to clathrin-coated vesicle formation, endocytosis, and protein trafficking between the Golgi and endosomal system. Does not appear to transport phosphatidylcholine or sphingomyelin. In Saccharomyces cerevisiae (strain ATCC 204508 / S288c) (Baker's yeast), this protein is Phospholipid-transporting ATPase DRS2.